The sequence spans 106 residues: A-type ATP synthase subunit F (106 aa).

Belongs to the V-ATPase F subunit family. As to quaternary structure, has multiple subunits with at least A(3), B(3), C, D, E, F, H, I and proteolipid K(x).

It is found in the cell membrane. Its function is as follows. Component of the A-type ATP synthase that produces ATP from ADP in the presence of a proton gradient across the membrane. The sequence is that of A-type ATP synthase subunit F from Haloferax volcanii (strain ATCC 29605 / DSM 3757 / JCM 8879 / NBRC 14742 / NCIMB 2012 / VKM B-1768 / DS2) (Halobacterium volcanii).